The primary structure comprises 500 residues: Protein nucleotidyltransferase YdiU (500 aa).

ATP is bound by residues Gly96, Gly98, Arg99, Lys119, Asp131, Gly132, Arg182, and Arg189. The active-site Proton acceptor is Asp258. Mg(2+) contacts are provided by Asn259 and Asp268. Asp268 is an ATP binding site.

The protein belongs to the SELO family. Requires Mg(2+) as cofactor. Mn(2+) is required as a cofactor.

It catalyses the reaction L-seryl-[protein] + ATP = 3-O-(5'-adenylyl)-L-seryl-[protein] + diphosphate. The catalysed reaction is L-threonyl-[protein] + ATP = 3-O-(5'-adenylyl)-L-threonyl-[protein] + diphosphate. It carries out the reaction L-tyrosyl-[protein] + ATP = O-(5'-adenylyl)-L-tyrosyl-[protein] + diphosphate. The enzyme catalyses L-histidyl-[protein] + UTP = N(tele)-(5'-uridylyl)-L-histidyl-[protein] + diphosphate. It catalyses the reaction L-seryl-[protein] + UTP = O-(5'-uridylyl)-L-seryl-[protein] + diphosphate. The catalysed reaction is L-tyrosyl-[protein] + UTP = O-(5'-uridylyl)-L-tyrosyl-[protein] + diphosphate. Nucleotidyltransferase involved in the post-translational modification of proteins. It can catalyze the addition of adenosine monophosphate (AMP) or uridine monophosphate (UMP) to a protein, resulting in modifications known as AMPylation and UMPylation. In Rhizobium etli (strain ATCC 51251 / DSM 11541 / JCM 21823 / NBRC 15573 / CFN 42), this protein is Protein nucleotidyltransferase YdiU.